A 292-amino-acid polypeptide reads, in one-letter code: Shikimate dehydrogenase (NADP(+)) (292 aa).

Residues S22 to S24 and S69 each bind shikimate. Catalysis depends on K73, which acts as the Proton acceptor. Residues N94 and D111 each coordinate shikimate. Residues G135–A139 and I236 each bind NADP(+). A shikimate-binding site is contributed by Y238. Residue G260 coordinates NADP(+).

The protein belongs to the shikimate dehydrogenase family. Homodimer.

It carries out the reaction shikimate + NADP(+) = 3-dehydroshikimate + NADPH + H(+). It functions in the pathway metabolic intermediate biosynthesis; chorismate biosynthesis; chorismate from D-erythrose 4-phosphate and phosphoenolpyruvate: step 4/7. Functionally, involved in the biosynthesis of the chorismate, which leads to the biosynthesis of aromatic amino acids. Catalyzes the reversible NADPH linked reduction of 3-dehydroshikimate (DHSA) to yield shikimate (SA). The polypeptide is Shikimate dehydrogenase (NADP(+)) (Streptococcus pyogenes serotype M3 (strain ATCC BAA-595 / MGAS315)).